The following is a 355-amino-acid chain: tRNA-specific 2-thiouridylase MnmA (355 aa).

ATP is bound by residues 8–15 and Met-34; that span reads GMSGGVDS. Cys-103 (nucleophile) is an active-site residue. A disulfide bridge connects residues Cys-103 and Cys-199. Position 127 (Gly-127) interacts with ATP. The interaction with tRNA stretch occupies residues 149-151; that stretch reads KDQ. Residue Cys-199 is the Cysteine persulfide intermediate of the active site. Residues 305 to 306 form an interaction with tRNA region; that stretch reads RY.

Belongs to the MnmA/TRMU family.

Its subcellular location is the cytoplasm. It carries out the reaction S-sulfanyl-L-cysteinyl-[protein] + uridine(34) in tRNA + AH2 + ATP = 2-thiouridine(34) in tRNA + L-cysteinyl-[protein] + A + AMP + diphosphate + H(+). Catalyzes the 2-thiolation of uridine at the wobble position (U34) of tRNA, leading to the formation of s(2)U34. The polypeptide is tRNA-specific 2-thiouridylase MnmA (Clostridium acetobutylicum (strain ATCC 824 / DSM 792 / JCM 1419 / IAM 19013 / LMG 5710 / NBRC 13948 / NRRL B-527 / VKM B-1787 / 2291 / W)).